The chain runs to 142 residues: Hemoglobin subunit alpha (142 aa).

N-acetylserine is present on Ser1. The Globin domain occupies 1–142 (SLTAKSKSIV…VASALSEKYR (142 aa)). O2 is bound at residue His59. His88 contacts heme b.

This sequence belongs to the globin family. Heterotetramer of two alpha chains and two beta chains. As to expression, red blood cells.

Its function is as follows. Involved in oxygen transport from gills to the various peripheral tissues. This is Hemoglobin subunit alpha (hba) from Electrophorus electricus (Electric eel).